The primary structure comprises 398 residues: Phosphoglycerate kinase (398 aa).

Substrate-binding positions include 21–23, R36, 59–62, R119, and R157; these read DFN and HLGR. Residues K208, G296, E327, and 354 to 357 each bind ATP; that span reads GGDS.

The protein belongs to the phosphoglycerate kinase family. As to quaternary structure, monomer.

It localises to the cytoplasm. It catalyses the reaction (2R)-3-phosphoglycerate + ATP = (2R)-3-phospho-glyceroyl phosphate + ADP. Its pathway is carbohydrate degradation; glycolysis; pyruvate from D-glyceraldehyde 3-phosphate: step 2/5. The protein is Phosphoglycerate kinase of Streptococcus pneumoniae (strain Taiwan19F-14).